The chain runs to 364 residues: MFKPVVKSRSSRSFCYLAGCLAMVAATLSSTAQAKSEWACPEGFTPKAGLNTDFPSDGKKRAFVVVPPKDSAGGAPVWVPMVGTVEATNWNLNVPRSGNNAKLAEHGYMVISPVRQCAEQDPNLGAGACNGVGKDGWTWNPWNDGRAPDASGDKYKTDAGDDVRFLEAMVRCVGTKWKLDRKRLFLGGISAGGTMTNRALLFDSEFWAGGMPISGEWYSTKDDGSTVPFQETRKMVAAAPAKIWQGRVGPYPLPSKLDPMVVITVWGGEKDLWDCGPPLGLCSDYRPTTQASSNYFSSISNVVHVACSATHGHMWPQVNTDAFNLWALNTMASHPKGSSPKDFKLTAPPEGYSCKIGRFTDHYK.

A signal peptide spans 1 to 34 (MFKPVVKSRSSRSFCYLAGCLAMVAATLSSTAQA). Catalysis depends on charge relay system residues serine 190 and serine 293.

It belongs to the peptidase S9A family. In terms of assembly, monomer.

It is found in the periplasm. The enzyme catalyses nonane-4,6-dione + H2O = pentan-2-one + butanoate + H(+). Functionally, catalyzes the hydrolysis of 4,6-nonanedione, a beta-diketone compound. Also mediates hydrolysis of oxidized polyvinyl alcohol (PVA) in the second step in the degradation of polyvinyl alcohol. Not active toward the monoketone structure. The protein is Oxidized polyvinyl alcohol hydrolase (oph) of Sphingopyxis sp. (strain 113P3).